Consider the following 213-residue polypeptide: MSSLPALDLFLSKYQQAYVEKLDEQPRYYAQEQESDCVVGEMDSDGAVFWQAVVRQTPGQFDNVETALELTLCAEINAFYGRHFSAPLFFDSKWGSGELIQVWNQTDFEYLQQNIIGHLMMKKKLKQEPTWFIGVLDDEDKMLTVNNSDGSVWVEIPGEVQSSKLAESLNEFISLLTPRVTPPVKLIEESMPELDHPGIWQRMKLMWRNLRGK.

This sequence belongs to the Syd family.

The protein resides in the cell inner membrane. Interacts with the SecY protein in vivo. May bind preferentially to an uncomplexed state of SecY, thus functioning either as a chelating agent for excess SecY in the cell or as a regulatory factor that negatively controls the translocase function. In Shewanella halifaxensis (strain HAW-EB4), this protein is Protein Syd.